The sequence spans 691 residues: Elongation factor G (691 aa).

The tr-type G domain maps to 8-282 (ERVRNIGIAA…AVVDYLPAPI (275 aa)). GTP is bound by residues 17–24 (AHIDAGKT), 81–85 (DTPGH), and 135–138 (NKMD).

Belongs to the TRAFAC class translation factor GTPase superfamily. Classic translation factor GTPase family. EF-G/EF-2 subfamily.

The protein resides in the cytoplasm. Catalyzes the GTP-dependent ribosomal translocation step during translation elongation. During this step, the ribosome changes from the pre-translocational (PRE) to the post-translocational (POST) state as the newly formed A-site-bound peptidyl-tRNA and P-site-bound deacylated tRNA move to the P and E sites, respectively. Catalyzes the coordinated movement of the two tRNA molecules, the mRNA and conformational changes in the ribosome. In Synechococcus sp. (strain WH7803), this protein is Elongation factor G.